Here is a 54-residue protein sequence, read N- to C-terminus: Small ribosomal subunit protein uS14 (54 aa).

Residues Cys19, Cys22, Cys37, and Cys40 each contribute to the Zn(2+) site.

The protein belongs to the universal ribosomal protein uS14 family. Zinc-binding uS14 subfamily. Part of the 30S ribosomal subunit. It depends on Zn(2+) as a cofactor.

Binds 16S rRNA, required for the assembly of 30S particles. The chain is Small ribosomal subunit protein uS14 from Sulfolobus acidocaldarius (strain ATCC 33909 / DSM 639 / JCM 8929 / NBRC 15157 / NCIMB 11770).